Reading from the N-terminus, the 320-residue chain is Glutaminase (320 aa).

Residues S70, N121, E165, N172, Y196, Y248, and V266 each contribute to the substrate site.

It belongs to the glutaminase family. As to quaternary structure, homotetramer.

The catalysed reaction is L-glutamine + H2O = L-glutamate + NH4(+). This Mycobacterium marinum (strain ATCC BAA-535 / M) protein is Glutaminase.